The chain runs to 588 residues: Pescadillo homolog (588 aa).

Residues 344-437 (PVSTLFSDFV…KLVPANLYLP (94 aa)) enclose the BRCT domain. 2 disordered regions span residues 446–533 (SPWG…EAEE) and 559–588 (KKEE…EGKK). Over residues 460 to 493 (DAEEEGEDDEDEDSEEGSGAEVEENVDEDEDDEE) the composition is skewed to acidic residues. 2 stretches are compositionally biased toward basic and acidic residues: residues 510-519 (SDIKDTEVKS) and 576-588 (KTKE…EGKK). Residues 512–588 (IKDTEVKSKN…EKLTKLEGKK (77 aa)) are a coiled coil.

The protein belongs to the pescadillo family. As to quaternary structure, component of the NOP7 complex, composed of ERB1, NOP7 and YTM1. The complex is held together by ERB1, which interacts with NOP7 via its N-terminal domain and with YTM1 via a high-affinity interaction between the seven-bladed beta-propeller domains of the 2 proteins. The NOP7 complex associates with the 66S pre-ribosome.

Its subcellular location is the nucleus. It localises to the nucleolus. It is found in the nucleoplasm. Its function is as follows. Component of the NOP7 complex, which is required for maturation of the 25S and 5.8S ribosomal RNAs and formation of the 60S ribosome. This chain is Pescadillo homolog, found in Vanderwaltozyma polyspora (strain ATCC 22028 / DSM 70294 / BCRC 21397 / CBS 2163 / NBRC 10782 / NRRL Y-8283 / UCD 57-17) (Kluyveromyces polysporus).